A 755-amino-acid chain; its full sequence is Exocyst complex component 3 (755 aa).

2 coiled-coil regions span residues 34 to 62 (DQLD…AAIQ) and 618 to 649 (RAVM…QLRF). Lys-38 is modified (N6-acetyllysine).

This sequence belongs to the SEC6 family. In terms of assembly, the exocyst complex is composed of EXOC1, EXOC2, EXOC3, EXOC4, EXOC5, EXOC6, EXOC7 and EXOC8. Interacts with EXOC3L1. Interacts with BIRC6/bruce. Interacts with MYRIP. Interacts with SLC6A9. Widely expressed, with highest levels in kidney, followed by brain (at protein level).

It localises to the cytoplasm. The protein resides in the perinuclear region. Its subcellular location is the cell projection. The protein localises to the growth cone. It is found in the neuron projection. It localises to the midbody. The protein resides in the golgi apparatus. Its function is as follows. Component of the exocyst complex involved in the docking of exocytic vesicles with fusion sites on the plasma membrane. This Rattus norvegicus (Rat) protein is Exocyst complex component 3 (Exoc3).